The sequence spans 362 residues: MAKEKIEIVVANDDTRIEKVDQVLPPIALLEKYPASEQAAALVKQTRHEAHNIIHGKDDRLLVVIGPCSIHDPKAAIEYATRLKPLREKYKDSLEIIMRVYFEKPRTTVGWKGLINEPYLNDTYRLNDGLRIARKLLSDINDLGVPAAGEFLDMITPQYLADFMSWGAIGARTTESQVHRELASGLSCAVGFKNATNGGVKVALDAIGAAEAPHYFLSVTKFGHSAIVSTKGNEDCHIILRGGDKGPNYSAEDVEKVCADIEKTGRIPHVMVDFSHANSSKQYKKQMDVCQDVCNQIAFGSKQIFGVMVESHLVEGRQDLVDGKAQTYGQSITDACIGWEDSERLLQQLSDAVIARRKATSN.

This sequence belongs to the class-I DAHP synthase family.

The enzyme catalyses D-erythrose 4-phosphate + phosphoenolpyruvate + H2O = 7-phospho-2-dehydro-3-deoxy-D-arabino-heptonate + phosphate. The protein operates within metabolic intermediate biosynthesis; chorismate biosynthesis; chorismate from D-erythrose 4-phosphate and phosphoenolpyruvate: step 1/7. Functionally, stereospecific condensation of phosphoenolpyruvate (PEP) and D-erythrose-4-phosphate (E4P) giving rise to 3-deoxy-D-arabino-heptulosonate-7-phosphate (DAHP). The chain is Phospho-2-dehydro-3-deoxyheptonate aldolase (aroG) from Haemophilus influenzae (strain ATCC 51907 / DSM 11121 / KW20 / Rd).